We begin with the raw amino-acid sequence, 60 residues long: Cytochrome c oxidase assembly protein COX14 homolog (60 aa).

Residues 10 to 32 form a helical membrane-spanning segment; that stretch reads VGYRLFSGSMMLLTVYGGYLCVV.

Its subcellular location is the mitochondrion membrane. Functionally, plays a role in the assembly or stability of the cytochrome c oxidase complex (COX). This chain is Cytochrome c oxidase assembly protein COX14 homolog, found in Danio rerio (Zebrafish).